The chain runs to 225 residues: 3-dehydroquinate dehydratase (225 aa).

Residues serine 6, 30–32 (EWR), and arginine 62 contribute to the 3-dehydroquinate site. The active-site Proton donor/acceptor is the histidine 118. The active-site Schiff-base intermediate with substrate is the lysine 143. 3-dehydroquinate-binding residues include arginine 186, serine 205, and glutamine 209.

It belongs to the type-I 3-dehydroquinase family. Homodimer.

The catalysed reaction is 3-dehydroquinate = 3-dehydroshikimate + H2O. Its pathway is metabolic intermediate biosynthesis; chorismate biosynthesis; chorismate from D-erythrose 4-phosphate and phosphoenolpyruvate: step 3/7. In terms of biological role, involved in the third step of the chorismate pathway, which leads to the biosynthesis of aromatic amino acids. Catalyzes the cis-dehydration of 3-dehydroquinate (DHQ) and introduces the first double bond of the aromatic ring to yield 3-dehydroshikimate. The chain is 3-dehydroquinate dehydratase from Streptococcus pneumoniae (strain Hungary19A-6).